We begin with the raw amino-acid sequence, 942 residues long: MTQLASSYDPKSFETDLYEAWEKAGHFKPSGTGEPYTILLPPPNVTGTLHMGHAFQQTLMDALVRYHRMRGYDTLWQVGTDHAGIATEMVVSRNLALEGKGETRDSLGREGFIGKVWEWKQQSGDTIERQMRRLGTSADWSRSTFTMDPQPSAAVNEAFVRWYEQGLIYRGQRLVNWDPVLKTAISDLEVESAEEDGFLWSIAYTLDEGLSYEHVERDADGVETLRETRDYLVVATTRPETLLGDTAVMVHPEDKRYAHLIGKSVVLPLTGRRVPVIADDYVDRAFGTGVVKVTPAHDFNDYEVGVRHSLPMINLFTPVAALNENAPERFQGLDRYAARKAVLAELEDLGILVETKAHKLQVPRGDRTGQVIEPYLTDQWFVKMDDLAKRGLELVEDGSISFVPPNWINTYRHWMNNIQDWCISRQLWWGHRIPAWFDEATGSCYVGRSEEEVRAKHNLGSDVVLNQESDVLETWFSSQLWPFSTLGWPNEQAMAERGFDRYLPSSVLITGFDIIFFWVARMIMATDNLVGKIPFKDVYFTGLIRDGQGQKMSKSKGNVLDPLDIIDGITIDDLVAKRTGGLMQPKMVEKIEKATRKEFPDGIAAHGADALRFTIAALATHGRDIKFDMNRAEGYKNFCNKLWNASRFALMNTEGAAFTGVPRPRTDAERWILARLAATTAEAQGHFAAYRFDLLAQCLYEFAWNAFCDWFLELSKPALNGADAADAESTRHTLLYVLEALLRLLHPLTPFITEQLWQQLAPRLGLAETTLSLRPYPTAAEFEGDFAQAEADVEWLKAVISAVRRVRSELNVAPSKLVPLRLQAGLEQDRVRIERFSASLSFLLKLDSIQWLAEGESAPPAAAAIVGELKLLVPLEGLVDLDAERVRLDKEIARVEAEKEKSETKLAKFTDKVPPAVVEQERVRLADWNTQLAGLREQRAKL.

The 'HIGH' region signature appears at 43 to 53; it reads PNVTGTLHMGH. Residues 551 to 555 carry the 'KMSKS' region motif; it reads KMSKS. K554 lines the ATP pocket. A coiled-coil region spans residues 876 to 942; the sequence is EGLVDLDAER…AGLREQRAKL (67 aa).

It belongs to the class-I aminoacyl-tRNA synthetase family. ValS type 1 subfamily. In terms of assembly, monomer.

Its subcellular location is the cytoplasm. It catalyses the reaction tRNA(Val) + L-valine + ATP = L-valyl-tRNA(Val) + AMP + diphosphate. Its function is as follows. Catalyzes the attachment of valine to tRNA(Val). As ValRS can inadvertently accommodate and process structurally similar amino acids such as threonine, to avoid such errors, it has a 'posttransfer' editing activity that hydrolyzes mischarged Thr-tRNA(Val) in a tRNA-dependent manner. This chain is Valine--tRNA ligase, found in Stenotrophomonas maltophilia (strain K279a).